The chain runs to 429 residues: MATLSFVFLLLGAVSWPPASASGQEFWPGQSAADILSGAASRRRYLLYDVNPPEGFNLRRDVYIRIASLLKTLLKTEEWVLVLPPWGRLYHWQSPDIHQVRIPWSEFFDLPSLNKNIPVIEYEQFIAESGGPFIDQVYVLQSYAEGWKEGTWEEKVDERPCIDQLLYSQDKHEYYRGWFWGYEETRGLNVSCLSVQGSASIVAPLLLRNTSARSVMLDRAENLLHDHYGGKEYWDTRRSMVFARHLREVGDEFRSRHLNSTDDADGIPFQEDWTKMKVKLGSALGGPYLGVHLRRKDFIWGHRQDVPSLEGAVRKIRSLMKTHRLDKVFVATDAVRKEYEELKKLLPEMVRFEPTWEELELYKDGGVAIIDQWICAHARFFIGTSVSTFSFRIHEEREILGLDPKTTYNRFCGDQEKACEQPTHWKITY.

The signal sequence occupies residues 1 to 21 (MATLSFVFLLLGAVSWPPASA). 53–57 (PEGFN) contributes to the GDP-beta-L-fucose binding site. Glu54 (proton acceptor) is an active-site residue. Residues Cys161 and Cys192 are joined by a disulfide bond. N-linked (GlcNAc...) asparagine glycans are attached at residues Asn189, Asn209, and Asn259. GDP-beta-L-fucose contacts are provided by residues 292 to 294 (HLR), Asp371, and 388 to 389 (TF). Cys412 and Cys419 are disulfide-bonded.

Belongs to the glycosyltransferase 68 family.

The protein localises to the endoplasmic reticulum. The protein resides in the golgi apparatus. It carries out the reaction L-seryl-[protein] + GDP-beta-L-fucose = 3-O-(alpha-L-fucosyl)-L-seryl-[protein] + GDP + H(+). It catalyses the reaction L-threonyl-[protein] + GDP-beta-L-fucose = 3-O-(alpha-L-fucosyl)-L-threonyl-[protein] + GDP + H(+). It participates in protein modification; protein glycosylation. Its function is as follows. Catalyzes the reaction that attaches fucose through an O-glycosidic linkage to a conserved serine or threonine residue in the consensus sequence C1-X-X-S/T-C2 of thrombospondin type I repeats (TSRs) where C1 and C2 are the first and second cysteines of the repeat, respectively. O-fucosylates members of several protein families including the ADAMTS, the thrombospondin (TSP) and spondin families. Required for the proper secretion of ADAMTS family members such as ADAMTSL1 and ADAMTS13. The O-fucosylation of TSRs is also required for restricting epithelial to mesenchymal transition (EMT), maintaining the correct patterning of mesoderm and localization of the definite endoderm. The protein is GDP-fucose protein O-fucosyltransferase 2 (POFUT2) of Pan troglodytes (Chimpanzee).